Consider the following 132-residue polypeptide: MSMTDPIADMLVRIKNAASVGKPNVRFPFSKVKLAIALVLKNEGYIFDAKVIQSDNSKSDIEVVLKYFEGRPVIRILKRVSRSGLRKYCGKAELPEVLGGLGVSIISTSKGIMTDSKARESGVGGEVLCFVA.

It belongs to the universal ribosomal protein uS8 family. In terms of assembly, part of the 30S ribosomal subunit. Contacts proteins S5 and S12.

In terms of biological role, one of the primary rRNA binding proteins, it binds directly to 16S rRNA central domain where it helps coordinate assembly of the platform of the 30S subunit. This Xylella fastidiosa (strain M23) protein is Small ribosomal subunit protein uS8.